The following is an 837-amino-acid chain: Putative outer membrane protein assembly factor TP_0326 (837 aa).

Residues 1-21 form the signal peptide; it reads MLKKASAFLIASCCVMSLAWA. The Periplasmic portion of the chain corresponds to 22–433; sequence QANDNWYEGK…ILNVEEQSTA (412 aa). POTRA domains follow at residues 31–105, 106–182, 185–273, 276–354, and 357–430; these read KPIS…VKER, PSVK…IQEG, TVVS…VVEG, YRYG…VVER, and SHVE…VEEQ. Residues 434–442 traverse the membrane as a beta stranded segment; it reads NVQFGVTFS. Residues 443 to 450 are Extracellular; loop L1-facing; sequence GVGEAGTF. Residues 451–461 traverse the membrane as a beta stranded segment; sequence PLSLFCQWEEK. Topologically, residues 462-468 are periplasmic; sequence NFLGKGN. A beta stranded membrane pass occupies residues 469 to 476; it reads EISVNATL. At 477–478 the chain is on the extracellular; loop L2 side; it reads GS. A beta stranded membrane pass occupies residues 479–489; that stretch reads EAQSLKLGYVE. The Periplasmic portion of the chain corresponds to 490–499; the sequence is RWFLGSPLTV. A beta stranded membrane pass occupies residues 500–520; that stretch reads GFDFELTHKNLFVYRAGSYGN. Topologically, residues 521–530 are extracellular; loop L3; the sequence is GLPHPYTSRE. A beta stranded membrane pass occupies residues 531–543; sequence QWASSPGLAESFR. Residues 544–554 are Periplasmic-facing; it reads LKYSRFESAIG. Residues 555-568 form a beta stranded membrane-spanning segment; the sequence is AHTGYQWYPRYAVI. Topologically, residues 569–601 are extracellular; loop L4; it reads RVNGGVDFRVVKNFYDKDNNQPFDLTVKEQLNW. The beta stranded transmembrane segment at 602 to 615 threads the bilayer; that stretch reads TSINSFWTSVSFDG. Over 616–623 the chain is Periplasmic; it reads RDFAYDPS. A beta stranded transmembrane segment spans residues 624-636; that stretch reads SGWFLGQRCTFNG. The Extracellular; loop L5 segment spans residues 637–644; sequence LVPFLEKE. A beta stranded membrane pass occupies residues 645–658; that stretch reads HSFRSDTKAEFYVT. Over 659–667 the chain is Periplasmic; that stretch reads LLNYPVSAV. A beta stranded membrane pass occupies residues 668-682; the sequence is WNLKFVLAFYTGVSV. Topologically, residues 683–724 are extracellular; loop L6; sequence QTYYGRRKSENGKGNGVRSGALVIDGVLVGRGWSEDAKKNTG. A beta stranded transmembrane segment spans residues 725–736; sequence DLLLHHWIEFRW. Over 737–741 the chain is Periplasmic; sequence PLAHG. A beta stranded transmembrane segment spans residues 742-756; that stretch reads IVSFDFFFDAAMVYN. Residues 757–786 are Extracellular; loop L7-facing; the sequence is IESQSPNGSSSASSSSSSSSSSSRTTSSEG. The tract at residues 761-785 is disordered; the sequence is SPNGSSSASSSSSSSSSSSRTTSSE. A compositionally biased stretch (low complexity) spans 765 to 784; it reads SSSASSSSSSSSSSSRTTSS. The beta stranded transmembrane segment at 787 to 799 threads the bilayer; that stretch reads LYKMSYGPGLRFT. At 800-802 the chain is on the periplasmic side; sequence LPQ. A beta stranded transmembrane segment spans residues 803–814; the sequence is FPLKLAFANTFT. Over 815–824 the chain is Extracellular; loop L8; sequence SPGGIPKTKK. A beta stranded membrane pass occupies residues 825 to 829; sequence NWNFV. At 830 to 837 the chain is on the periplasmic side; sequence LSFTVNNL.

It belongs to the BamA family. As to quaternary structure, part of 2 complexes of about 239 and 164 kDa.

Its subcellular location is the cell outer membrane. In terms of biological role, might be part of the outer membrane protein assembly complex, which is involved in assembly and insertion of beta-barrel proteins into the outer membrane. Its function is as follows. Both rabbit immune serum and rabbit antiserum specific for extracytoplasmic loop L4 promote bacteria internalization by rabbit peritoneal macrophages. Pools of human syphilitic sera from the USA and Columbia recognize both the N-terminal POTRA-containing and C-terminal beta-barrel domains as well as loop L4, showing this protein stimulates the immune system in both humans and rabbits. This is Putative outer membrane protein assembly factor TP_0326 (tp92) from Treponema pallidum (strain Nichols).